The sequence spans 314 residues: NADH-ubiquinone oxidoreductase chain 1 (314 aa).

A run of 8 helical transmembrane segments spans residues 5–25 (IMPL…VAFL), 78–98 (FSPV…PYLI), 105–125 (LGVL…MIAG), 152–172 (ALIL…SFYF), 176–196 (YVWF…SCLA), 227–247 (LIFL…VVIF), 251–271 (DIYS…FIWV), and 294–314 (LSLN…SLLF).

It belongs to the complex I subunit 1 family.

It localises to the mitochondrion inner membrane. It catalyses the reaction a ubiquinone + NADH + 5 H(+)(in) = a ubiquinol + NAD(+) + 4 H(+)(out). Functionally, core subunit of the mitochondrial membrane respiratory chain NADH dehydrogenase (Complex I) that is believed to belong to the minimal assembly required for catalysis. Complex I functions in the transfer of electrons from NADH to the respiratory chain. The immediate electron acceptor for the enzyme is believed to be ubiquinone. This chain is NADH-ubiquinone oxidoreductase chain 1 (mt:ND1), found in Anopheles gambiae (African malaria mosquito).